The primary structure comprises 153 residues: RNA-binding protein 3 (153 aa).

The 79-residue stretch at 6-84 (GKLFVGGLNF…RQIRVDHAGK (79 aa)) folds into the RRM domain. Residue Arg-47 is modified to Omega-N-methylarginine. The interval 81-153 (HAGKSARGSR…GGNYRDNYDN (73 aa)) is disordered. Over residues 89-112 (SRGGAFGGRGRSYSRGGGDQGYGS) the composition is skewed to gly residues. Residue Arg-103 is modified to Asymmetric dimethylarginine; alternate. Arg-103 is subject to Dimethylated arginine; alternate. Arg-103 is subject to Omega-N-methylarginine; alternate. Arg-118 and Arg-128 each carry omega-N-methylarginine. 2 positions are modified to phosphoserine: Ser-133 and Ser-143. A Phosphotyrosine modification is found at Tyr-151.

In terms of assembly, interacts with RPL4. Associates with the 60S ribosomal subunits in an RNA-independent manner. Post-translationally, arg-103 is dimethylated, probably to asymmetric dimethylarginine. In terms of processing, phosphorylated.

The protein resides in the nucleus. Its subcellular location is the cytoplasm. It is found in the cell projection. It localises to the dendrite. In terms of biological role, cold-inducible mRNA binding protein that enhances global protein synthesis at both physiological and mild hypothermic temperatures. Reduces the relative abundance of microRNAs, when overexpressed. Enhances phosphorylation of translation initiation factors and active polysome formation. This chain is RNA-binding protein 3 (Rbm3), found in Mus musculus (Mouse).